The chain runs to 215 residues: uncharacterized protein (215 aa).

A disordered region spans residues 120 to 147; it reads HRAPQGTSSYQEGRRAHEATSAESDDDN.

This is an uncharacterized protein from Homo sapiens (Human).